A 196-amino-acid chain; its full sequence is Small ribosomal subunit protein uS4C (196 aa).

Positions 87–149 constitute an S4 RNA-binding domain; that stretch reads CRLDNVVYRI…HRQNEMFSNN (63 aa).

Belongs to the universal ribosomal protein uS4 family. In terms of assembly, part of the 30S ribosomal subunit. Contacts protein S5. The interaction surface between S4 and S5 is involved in control of translational fidelity.

Functionally, one of the primary rRNA binding proteins, it binds directly to 16S rRNA where it nucleates assembly of the body of the 30S subunit. With S5 and S12 plays an important role in translational accuracy. This Clostridium acetobutylicum (strain ATCC 824 / DSM 792 / JCM 1419 / IAM 19013 / LMG 5710 / NBRC 13948 / NRRL B-527 / VKM B-1787 / 2291 / W) protein is Small ribosomal subunit protein uS4C (rpsD3).